Here is a 397-residue protein sequence, read N- to C-terminus: Arginine biosynthesis bifunctional protein ArgJ (397 aa).

Thr-147, Lys-173, Thr-184, Glu-270, Asn-392, and Thr-397 together coordinate substrate. Thr-184 acts as the Nucleophile in catalysis.

It belongs to the ArgJ family. In terms of assembly, heterotetramer of two alpha and two beta chains.

It localises to the cytoplasm. It carries out the reaction N(2)-acetyl-L-ornithine + L-glutamate = N-acetyl-L-glutamate + L-ornithine. The enzyme catalyses L-glutamate + acetyl-CoA = N-acetyl-L-glutamate + CoA + H(+). It participates in amino-acid biosynthesis; L-arginine biosynthesis; L-ornithine and N-acetyl-L-glutamate from L-glutamate and N(2)-acetyl-L-ornithine (cyclic): step 1/1. Its pathway is amino-acid biosynthesis; L-arginine biosynthesis; N(2)-acetyl-L-ornithine from L-glutamate: step 1/4. Its function is as follows. Catalyzes two activities which are involved in the cyclic version of arginine biosynthesis: the synthesis of N-acetylglutamate from glutamate and acetyl-CoA as the acetyl donor, and of ornithine by transacetylation between N(2)-acetylornithine and glutamate. This is Arginine biosynthesis bifunctional protein ArgJ from Staphylococcus epidermidis (strain ATCC 35984 / DSM 28319 / BCRC 17069 / CCUG 31568 / BM 3577 / RP62A).